The primary structure comprises 217 residues: Carbon disulfide hydrolase (217 aa).

Zn(2+)-binding residues include C39, H98, and C101. Positions 192 to 217 (DKEKRARTDCTPTPYGVKGNQPPRWK) are disordered.

This sequence belongs to the beta-class carbonic anhydrase family. As to quaternary structure, forms only homooctamers in solution. Zn(2+) is required as a cofactor.

The catalysed reaction is carbon disulfide + 2 H2O = 2 hydrogen sulfide + CO2 + 2 H(+). It participates in sulfur metabolism; hydrogen sulfide biosynthesis. Functionally, catalyzes the conversion of carbon disulfide into hydrogen sulfide and carbon dioxide, with carbonyl sulfide as an intermediate. Likely plays a key role in sulfur metabolism that allows A.thiooxidans S1p to grow on carbon disulfide as the main carbon and energy source. Does not show carbonic anhydrase activity (hydration of CO(2) to carbonate). The protein is Carbon disulfide hydrolase of Acidithiobacillus thiooxidans (Thiobacillus thiooxidans).